Here is a 956-residue protein sequence, read N- to C-terminus: Plasma membrane ATPase 3 (956 aa).

The Cytoplasmic segment spans residues 1-65 (MGEKPEVLDA…EKKESKFSKF (65 aa)). The helical transmembrane segment at 66–85 (LGFMWNPLSWVMEAAAIMAI) threads the bilayer. The Extracellular portion of the chain corresponds to 86 to 97 (ALANGGGKPPDW). A helical transmembrane segment spans residues 98–118 (QDFVGIITLLIINSTISFIEE). The Cytoplasmic segment spans residues 119–247 (NNAGNAAAAL…GHFQKVLTAI (129 aa)). The chain crosses the membrane as a helical span at residues 248 to 268 (GNFCICSIAVGMIIEIIVMYP). Topologically, residues 269-278 (IQHRKYRPGI) are extracellular. Residues 279-300 (DNLLVLLIGGIPIAMPTVLSVT) traverse the membrane as a helical segment. Topologically, residues 301-647 (MAIGSHRLAQ…TSRAIFQRMK (347 aa)) are cytoplasmic. The 4-aspartylphosphate intermediate role is filled by aspartate 333. Mg(2+) is bound by residues aspartate 592 and aspartate 596. Residues 648–669 (NYTIYAVSITIRIVLGFMLLAL) form a helical membrane-spanning segment. At 670–674 (IWQFD) the chain is on the extracellular side. Residues 675 to 697 (FPPFMVLIIAILNDGTIMTISKD) traverse the membrane as a helical segment. Residues 698–713 (RVKPSPLPDSWKLAEI) are Cytoplasmic-facing. Residues 714-734 (FTTGVVLGGYLAMMTVIFFWA) traverse the membrane as a helical segment. Over 735-759 (AYKTNFFPRVFGVSTLEKTATDDFR) the chain is Extracellular. The chain crosses the membrane as a helical span at residues 760 to 780 (KLASAIYLQVSTISQALIFVT). Residues 781–792 (RSRSWSFMERPG) are Cytoplasmic-facing. The helical transmembrane segment at 793 to 813 (LLLVVAFFIAQLVATLIAVYA) threads the bilayer. At 814 to 822 (NWSFAAIEG) the chain is on the extracellular side. The helical transmembrane segment at 823–843 (IGWGWAGVIWLYNIVFYIPLD) threads the bilayer. Residues 844–956 (LXXFLIRYAL…IETIQQAYTV (113 aa)) are Cytoplasmic-facing.

It belongs to the cation transport ATPase (P-type) (TC 3.A.3) family. Type IIIA subfamily. As to expression, expressed in roots, stems, leaves from both vegetative and flowering plants, and flowers at early and late stages of development with highest expression levels found in flowers and root tissue.

Its subcellular location is the cell membrane. The catalysed reaction is ATP + H2O + H(+)(in) = ADP + phosphate + 2 H(+)(out). The plasma membrane ATPase of plants and fungi is a hydrogen ion pump. The proton gradient it generates drives the active transport of nutrients by H(+)-symport. The resulting external acidification and/or internal alkinization may mediate growth responses. The protein is Plasma membrane ATPase 3 (PMA3) of Nicotiana plumbaginifolia (Leadwort-leaved tobacco).